Here is a 287-residue protein sequence, read N- to C-terminus: 4-hydroxybenzoate octaprenyltransferase (287 aa).

8 helical membrane passes run 23–43 (IGSLLLLWPTYWALWLAGGTA), 46–66 (GKLLLVFTCGVFFMRAAGCVI), 99–119 (LFVLLVGLSFALVLTLNAMTI), 141–161 (LPQVILGMAFGWSIPMAYAAV), 162–182 (GESLPLSCWLLFAANICWTVA), 213–233 (LVIGLLQLATLLLLLWVGDLN), 237–257 (GAYYWGVLLAAVLFVYQQQLI), and 266–286 (FRAFMNNNYVGLILFLGILLA).

Belongs to the UbiA prenyltransferase family. Mg(2+) is required as a cofactor.

The protein resides in the cell inner membrane. It catalyses the reaction all-trans-octaprenyl diphosphate + 4-hydroxybenzoate = 4-hydroxy-3-(all-trans-octaprenyl)benzoate + diphosphate. It functions in the pathway cofactor biosynthesis; ubiquinone biosynthesis. In terms of biological role, catalyzes the prenylation of para-hydroxybenzoate (PHB) with an all-trans polyprenyl group. Mediates the second step in the final reaction sequence of ubiquinone-8 (UQ-8) biosynthesis, which is the condensation of the polyisoprenoid side chain with PHB, generating the first membrane-bound Q intermediate 3-octaprenyl-4-hydroxybenzoate. The polypeptide is 4-hydroxybenzoate octaprenyltransferase (Edwardsiella ictaluri (strain 93-146)).